The sequence spans 441 residues: Protein dcd1A (441 aa).

An N-terminal signal peptide occupies residues 1 to 23; sequence MKIFNKLIFLIIQCILIISVTNA. Asn45, Asn261, Asn308, and Asn419 each carry an N-linked (GlcNAc...) asparagine glycan.

The protein localises to the secreted. The polypeptide is Protein dcd1A (dcd1A) (Dictyostelium discoideum (Social amoeba)).